Reading from the N-terminus, the 348-residue chain is Heat-inducible transcription repressor HrcA (348 aa).

The protein belongs to the HrcA family.

Negative regulator of class I heat shock genes (grpE-dnaK-dnaJ and groELS operons). Prevents heat-shock induction of these operons. In Thermodesulfovibrio yellowstonii (strain ATCC 51303 / DSM 11347 / YP87), this protein is Heat-inducible transcription repressor HrcA.